Here is a 559-residue protein sequence, read N- to C-terminus: CTP synthase (559 aa).

The amidoligase domain stretch occupies residues 1–270; sequence MTKFVFVTGG…DGLICDKLRL (270 aa). S13 contacts CTP. S13 serves as a coordination point for UTP. ATP contacts are provided by residues 14 to 19 and D71; that span reads SLGKGI. Residues D71 and E144 each coordinate Mg(2+). CTP contacts are provided by residues 151–153, 191–196, and K227; these read DIE and KTKPTQ. Residues 191-196 and K227 each bind UTP; that span reads KTKPTQ. Residues 295-548 enclose the Glutamine amidotransferase type-1 domain; the sequence is TIAMVGKYVD…IKAAIDHQKS (254 aa). Residue G357 coordinates L-glutamine. C384 acts as the Nucleophile; for glutamine hydrolysis in catalysis. L-glutamine-binding positions include 385–388, E408, and R474; that span reads LGMQ. Active-site residues include H521 and E523.

It belongs to the CTP synthase family. Homotetramer.

The catalysed reaction is UTP + L-glutamine + ATP + H2O = CTP + L-glutamate + ADP + phosphate + 2 H(+). It catalyses the reaction L-glutamine + H2O = L-glutamate + NH4(+). It carries out the reaction UTP + NH4(+) + ATP = CTP + ADP + phosphate + 2 H(+). The protein operates within pyrimidine metabolism; CTP biosynthesis via de novo pathway; CTP from UDP: step 2/2. Allosterically activated by GTP, when glutamine is the substrate; GTP has no effect on the reaction when ammonia is the substrate. The allosteric effector GTP functions by stabilizing the protein conformation that binds the tetrahedral intermediate(s) formed during glutamine hydrolysis. Inhibited by the product CTP, via allosteric rather than competitive inhibition. Functionally, catalyzes the ATP-dependent amination of UTP to CTP with either L-glutamine or ammonia as the source of nitrogen. Regulates intracellular CTP levels through interactions with the four ribonucleotide triphosphates. The polypeptide is CTP synthase (Paracidovorax citrulli (strain AAC00-1) (Acidovorax citrulli)).